A 367-amino-acid chain; its full sequence is Choline-phosphate cytidylyltransferase A (367 aa).

N-acetylmethionine is present on Met1. A disordered region spans residues 1 to 32; the sequence is MDAQSSAKVNSRKRRKEAPGPNGATEEDGIPS. Lys8 is subject to N6-acetyllysine. CTP contacts are provided by Ile84, Phe85, His92, and Lys122. Phosphocholine contacts are provided by Lys122 and Trp151. CTP is bound by residues His168, Asp169, Tyr173, Gln195, Arg196, Thr197, and Ile200. Amphipathic regions lie at residues 228-287 and 298-315; these read KELN…EFIG and ALKHMLKEGKGRMLQAIS. Phosphoserine is present on Ser233. Positions 272–293 are autoinhibitory (AI); it reads IDLIQKWEEKSREFIGSFLEMF. The disordered stretch occupies residues 313 to 367; the sequence is AISPKQSPSSSPTHERSPSPSFRWPFSGKTSPSSSPASLSRCRAVTCDISEDEED. Ser315, Ser319, Ser321, Ser322, and Ser323 each carry phosphoserine. Positions 315-324 are enriched in polar residues; that stretch reads SPKQSPSSSP. Copy 1 of the repeat occupies 319 to 324; that stretch reads SPSSSP. The 3 X repeats stretch occupies residues 319 to 348; it reads SPSSSPTHERSPSPSFRWPFSGKTSPSSSP. Thr325 is subject to Phosphothreonine. Phosphoserine occurs at positions 329, 331, and 333. The stretch at 329–333 is one 2; approximate repeat; that stretch reads SPSPS. Low complexity predominate over residues 330–352; sequence PSPSFRWPFSGKTSPSSSPASLS. A Phosphothreonine modification is found at Thr342. Phosphoserine is present on residues Ser343, Ser345, Ser346, Ser347, Ser350, and Ser352. Copy 3 of the repeat occupies 343–348; the sequence is SPSSSP. Thr358 carries the post-translational modification Phosphothreonine. Ser362 carries the post-translational modification Phosphoserine.

This sequence belongs to the cytidylyltransferase family. As to quaternary structure, homodimer. Post-translationally, the serine residues of the C-terminus are phosphorylated. The inactive soluble form is stabilized by phosphorylation, the active membrane bound form is promoted by anionic lipids or diacylglycerol, and is stabilized by dephosphorylation. In terms of processing, monoubiquitinated by the SCF(FBXL2) complex, leading to proteasomal degradation. In terms of tissue distribution, brain and liver (at protein level). Also found in heart, kidney, spleen, lung, skeletal muscle, ovary and testis.

The protein localises to the cytoplasm. The protein resides in the cytosol. It is found in the membrane. It localises to the endoplasmic reticulum membrane. Its subcellular location is the nucleus. It carries out the reaction phosphocholine + CTP + H(+) = CDP-choline + diphosphate. Its pathway is phospholipid metabolism; phosphatidylcholine biosynthesis; phosphatidylcholine from phosphocholine: step 1/2. Its activity is regulated as follows. Interconverts between an inactive cytosolic form and an active membrane-bound form. Activation involves disruption of an inhibitory interaction between helices at the base of the active site and the autoinhibitory (AI) region. Functionally, catalyzes the key rate-limiting step in the CDP-choline pathway for phosphatidylcholine biosynthesis. The protein is Choline-phosphate cytidylyltransferase A (Pcyt1a) of Mus musculus (Mouse).